The sequence spans 81 residues: Cytotoxin 5 (81 aa).

Residues 1–21 form the signal peptide; the sequence is MKTLLLTLVVVTIVCLDLGYT. 4 disulfide bridges follow: Cys-24/Cys-42, Cys-35/Cys-59, Cys-63/Cys-74, and Cys-75/Cys-80.

It belongs to the three-finger toxin family. Short-chain subfamily. Type IA cytotoxin sub-subfamily. In terms of assembly, monomer in solution; Homodimer and oligomer in the presence of negatively charged lipids forming a pore with a size ranging between 20 and 30 Angstroms. Expressed by the venom gland.

It is found in the secreted. The protein localises to the target cell membrane. In terms of biological role, shows cytolytic activity on many different cells by forming pore in lipid membranes. In vivo, increases heart rate or kills the animal by cardiac arrest. In addition, it binds to heparin with high affinity, interacts with Kv channel-interacting protein 1 (KCNIP1) in a calcium-independent manner, and binds to integrin alpha-V/beta-3 (ITGAV/ITGB3) with moderate affinity. The chain is Cytotoxin 5 from Naja atra (Chinese cobra).